The following is a 343-amino-acid chain: C5a anaphylatoxin chemotactic receptor 2 (343 aa).

The Extracellular portion of the chain corresponds to M1–L44. An N-linked (GlcNAc...) asparagine glycan is attached at N3. Residues L45 to W67 traverse the membrane as a helical segment. The Cytoplasmic segment spans residues K68 to W78. The chain crosses the membrane as a helical span at residues F79 to A101. Topologically, residues Q102–T120 are extracellular. C113 and C192 form a disulfide bridge. Residues V121–F143 traverse the membrane as a helical segment. At R144 to C155 the chain is on the cytoplasmic side. A helical membrane pass occupies residues G156–Y178. Residues R179–T208 lie on the Extracellular side of the membrane. Residues V209–R231 form a helical membrane-spanning segment. The Cytoplasmic segment spans residues Q232–A243. Residues V244–S266 form a helical membrane-spanning segment. Topologically, residues S267–P280 are extracellular. A helical membrane pass occupies residues L281 to F300. Over G301–V343 the chain is Cytoplasmic. A Phosphoserine modification is found at S326.

It belongs to the G-protein coupled receptor 1 family. As to quaternary structure, interacts with C3 (the anaphylatoxin peptide C3a and the adipogenic hormone ASP); the interaction occurs with higher affinity for ASP, enhancing the phosphorylation and activation of GPR77, recruitment of ARRB2 to the cell surface and endocytosis of GRP77.

It is found in the cell membrane. Receptor for the chemotactic and inflammatory C3a, C4a and C5a anaphylatoxin peptides and also for their dearginated forms ASP/C3adesArg, C4adesArg and C5adesArg respectively. Couples weakly to G(i)-mediated signaling pathways. In Rattus norvegicus (Rat), this protein is C5a anaphylatoxin chemotactic receptor 2 (C5ar2).